Here is a 270-residue protein sequence, read N- to C-terminus: 3-methyl-2-oxobutanoate hydroxymethyltransferase (270 aa).

Mg(2+) is bound by residues D53 and D92. Residues 53–54 (DS), D92, and K120 each bind 3-methyl-2-oxobutanoate. Residue E122 coordinates Mg(2+). E189 (proton acceptor) is an active-site residue.

This sequence belongs to the PanB family. As to quaternary structure, homodecamer; pentamer of dimers. Mg(2+) is required as a cofactor.

It is found in the cytoplasm. The catalysed reaction is 3-methyl-2-oxobutanoate + (6R)-5,10-methylene-5,6,7,8-tetrahydrofolate + H2O = 2-dehydropantoate + (6S)-5,6,7,8-tetrahydrofolate. It participates in cofactor biosynthesis; (R)-pantothenate biosynthesis; (R)-pantoate from 3-methyl-2-oxobutanoate: step 1/2. Its function is as follows. Catalyzes the reversible reaction in which hydroxymethyl group from 5,10-methylenetetrahydrofolate is transferred onto alpha-ketoisovalerate to form ketopantoate. This Saccharophagus degradans (strain 2-40 / ATCC 43961 / DSM 17024) protein is 3-methyl-2-oxobutanoate hydroxymethyltransferase.